The primary structure comprises 284 residues: Tropomyosin alpha-1 chain (284 aa).

M1 is modified (N-acetylmethionine). Residues 1–38 (MDAIKKKMQMLKLDKENALDRAEQAEADKKAAEDRSKQ) are disordered. The stretch at 1 to 284 (MDAIKKKMQM…DHALNDMTSI (284 aa)) forms a coiled coil. Positions 12 to 38 (KLDKENALDRAEQAEADKKAAEDRSKQ) are enriched in basic and acidic residues. Residue S45 is modified to Phosphoserine. The interval 116–136 (AEKAADESERGMKVIESRAQK) is disordered. 4 positions are modified to phosphoserine: S174, S186, S206, and S252. Position 261 is a phosphotyrosine (Y261). Phosphoserine occurs at positions 271 and 283.

Belongs to the tropomyosin family. As to quaternary structure, homodimer. Heterodimer of an alpha (TPM1, TPM3 or TPM4) and a beta (TPM2) chain. Interacts with HRG (via the HRR domain); the interaction contributes to the antiangiogenic properties of the histidine/proline-rich region (HRR) of HRG. Interacts (via N-terminus) with LMOD2 (via N-terminus) and TMOD1 (via N-terminus). Phosphorylated at Ser-283 by DAPK1 in response to oxidative stress and this phosphorylation enhances stress fiber formation in endothelial cells.

It localises to the cytoplasm. Its subcellular location is the cytoskeleton. Its function is as follows. Binds to actin filaments in muscle and non-muscle cells. Plays a central role, in association with the troponin complex, in the calcium dependent regulation of vertebrate striated muscle contraction. Smooth muscle contraction is regulated by interaction with caldesmon. In non-muscle cells is implicated in stabilizing cytoskeleton actin filaments. The chain is Tropomyosin alpha-1 chain (Tpm1) from Mus musculus (Mouse).